A 558-amino-acid polypeptide reads, in one-letter code: EF-hand and coiled-coil domain-containing protein 1 (558 aa).

Residues 43–78 (GLDQYLQEVFHHLDCRGAGRLPRADFRALCAVLGLN) form the EF-hand domain. Basic residues predominate over residues 161–170 (LRRPRRRRRP). 2 disordered regions span residues 161 to 183 (LRRP…YGER) and 304 to 395 (RSEG…QPSG). 2 coiled-coil regions span residues 179-304 (AYGE…RGYR) and 453-495 (VEAE…LNIS).

The chain is EF-hand and coiled-coil domain-containing protein 1 (Efcc1) from Mus musculus (Mouse).